The sequence spans 379 residues: Dual-specificity RNA methyltransferase RlmN (379 aa).

The active-site Proton acceptor is glutamate 95. The Radical SAM core domain maps to 101 to 345; that stretch reads EETRGTLCVS…TTVRKTRGDD (245 aa). Cysteine 108 and cysteine 350 are joined by a disulfide. [4Fe-4S] cluster contacts are provided by cysteine 115, cysteine 119, and cysteine 122. Residues 176-177, serine 208, 230-232, and asparagine 307 each bind S-adenosyl-L-methionine; these read GE and SLH. Catalysis depends on cysteine 350, which acts as the S-methylcysteine intermediate.

This sequence belongs to the radical SAM superfamily. RlmN family. [4Fe-4S] cluster serves as cofactor.

Its subcellular location is the cytoplasm. The catalysed reaction is adenosine(2503) in 23S rRNA + 2 reduced [2Fe-2S]-[ferredoxin] + 2 S-adenosyl-L-methionine = 2-methyladenosine(2503) in 23S rRNA + 5'-deoxyadenosine + L-methionine + 2 oxidized [2Fe-2S]-[ferredoxin] + S-adenosyl-L-homocysteine. The enzyme catalyses adenosine(37) in tRNA + 2 reduced [2Fe-2S]-[ferredoxin] + 2 S-adenosyl-L-methionine = 2-methyladenosine(37) in tRNA + 5'-deoxyadenosine + L-methionine + 2 oxidized [2Fe-2S]-[ferredoxin] + S-adenosyl-L-homocysteine. Functionally, specifically methylates position 2 of adenine 2503 in 23S rRNA and position 2 of adenine 37 in tRNAs. m2A2503 modification seems to play a crucial role in the proofreading step occurring at the peptidyl transferase center and thus would serve to optimize ribosomal fidelity. This chain is Dual-specificity RNA methyltransferase RlmN, found in Burkholderia vietnamiensis (strain G4 / LMG 22486) (Burkholderia cepacia (strain R1808)).